Here is a 587-residue protein sequence, read N- to C-terminus: Glutamine--tRNA ligase (587 aa).

The short motif at 58-68 (PEPNGYLHIGH) is the 'HIGH' region element. ATP is bound by residues 59–61 (EPN) and 65–71 (HIGHAKS). 2 residues coordinate L-glutamine: D91 and Y240. ATP is bound by residues T259 and 294-295 (RL). Residues 301–305 (VTSKR) carry the 'KMSKS' region motif.

This sequence belongs to the class-I aminoacyl-tRNA synthetase family. As to quaternary structure, monomer.

It localises to the cytoplasm. The catalysed reaction is tRNA(Gln) + L-glutamine + ATP = L-glutaminyl-tRNA(Gln) + AMP + diphosphate. The protein is Glutamine--tRNA ligase of Bordetella bronchiseptica (strain ATCC BAA-588 / NCTC 13252 / RB50) (Alcaligenes bronchisepticus).